Consider the following 406-residue polypeptide: Histone-lysine N-methyltransferase SUV39H2 (406 aa).

The Chromo domain occupies tyrosine 43–lysine 101. The Pre-SET domain occupies valine 185 to glycine 243. Residues cysteine 187, cysteine 189, cysteine 192, cysteine 197, cysteine 198, cysteine 225, cysteine 229, cysteine 231, and cysteine 235 each contribute to the Zn(2+) site. One can recognise an SET domain in the interval tyrosine 246–glutamine 369. S-adenosyl-L-methionine is bound by residues arginine 257–tryptophan 259, tyrosine 300, and asparagine 326–histidine 327. Cysteine 329, cysteine 394, cysteine 396, and cysteine 401 together coordinate Zn(2+). Positions valine 390–asparagine 406 constitute a Post-SET domain.

This sequence belongs to the class V-like SAM-binding methyltransferase superfamily. Histone-lysine methyltransferase family. Suvar3-9 subfamily.

It localises to the nucleus. Its subcellular location is the chromosome. It is found in the centromere. The enzyme catalyses L-lysyl(9)-[histone H3] + 3 S-adenosyl-L-methionine = N(6),N(6),N(6)-trimethyl-L-lysyl(9)-[histone H3] + 3 S-adenosyl-L-homocysteine + 3 H(+). Its function is as follows. Histone methyltransferase that specifically trimethylates 'Lys-9' of histone H3 using monomethylated H3 'Lys-9' as substrate. H3 'Lys-9' trimethylation represents a specific tag for epigenetic transcriptional repression by recruiting HP1 (CBX1, CBX3 and/or CBX5) proteins to methylated histones. Mainly functions in heterochromatin regions, thereby playing a central role in the establishment of constitutive heterochromatin at pericentric and telomere regions. H3 'Lys-9' trimethylation is also required to direct DNA methylation at pericentric repeats. SUV39H1 is targeted to histone H3 via its interaction with RB1 and is involved in many processes. The protein is Histone-lysine N-methyltransferase SUV39H2 (suv39h2) of Xenopus tropicalis (Western clawed frog).